The primary structure comprises 255 residues: Taurine import ATP-binding protein TauB (255 aa).

The region spanning 2–229 (LQISHLYADY…RFVAGESSRS (228 aa)) is the ABC transporter domain. Position 34-41 (34-41 (GPSGCGKT)) interacts with ATP.

The protein belongs to the ABC transporter superfamily. Taurine importer (TC 3.A.1.17.1) family. As to quaternary structure, the complex is composed of two ATP-binding proteins (TauB), two transmembrane proteins (TauC) and a solute-binding protein (TauA).

Its subcellular location is the cell inner membrane. It catalyses the reaction taurine(out) + ATP + H2O = taurine(in) + ADP + phosphate + H(+). Its function is as follows. Part of the ABC transporter complex TauABC involved in taurine import. Responsible for energy coupling to the transport system. The protein is Taurine import ATP-binding protein TauB of Escherichia coli O6:H1 (strain CFT073 / ATCC 700928 / UPEC).